The primary structure comprises 312 residues: Cytoplasmic dynein intermediate light chain DYN3 (312 aa).

The protein belongs to the dynein light intermediate chain DYN3 family. In terms of assembly, the dynein complex consists of at least two heavy chains and a number of intermediate and light chains. Interacts with DYN1.

It is found in the cytoplasm. The protein localises to the cytoskeleton. Its function is as follows. Component of the cytoplasmic dynein which acts as a motor for the intracellular retrograde motility of vesicles and organelles along microtubules. May play an important role in the proper orientation of the mitotic spindle into the budding daughter cell yeast. Probably required for normal progression of the cell cycle. The chain is Cytoplasmic dynein intermediate light chain DYN3 (DYN3) from Saccharomyces cerevisiae (strain ATCC 204508 / S288c) (Baker's yeast).